The following is a 188-amino-acid chain: Peptidyl-tRNA hydrolase (188 aa).

Tyr-17 lines the tRNA pocket. His-22 functions as the Proton acceptor in the catalytic mechanism. Residues Tyr-65, Asn-67, and Asn-113 each coordinate tRNA.

It belongs to the PTH family. Monomer.

The protein localises to the cytoplasm. It catalyses the reaction an N-acyl-L-alpha-aminoacyl-tRNA + H2O = an N-acyl-L-amino acid + a tRNA + H(+). Functionally, hydrolyzes ribosome-free peptidyl-tRNAs (with 1 or more amino acids incorporated), which drop off the ribosome during protein synthesis, or as a result of ribosome stalling. In terms of biological role, catalyzes the release of premature peptidyl moieties from peptidyl-tRNA molecules trapped in stalled 50S ribosomal subunits, and thus maintains levels of free tRNAs and 50S ribosomes. The polypeptide is Peptidyl-tRNA hydrolase (Mycoplasma pneumoniae (strain ATCC 29342 / M129 / Subtype 1) (Mycoplasmoides pneumoniae)).